We begin with the raw amino-acid sequence, 217 residues long: MSLVGGFPHHPVVHHEGYPFAAAAAAAAAAAASRCSHEENPYFHGWLIGHPEMSPPDYSMALSYSPEYASGAAGLDHSHYGGVPPGAGPPGLGGPRPVKRRGTANRKERRRTQSINSAFAELRECIPNVPADTKLSKIKTLRLATSYIAYLMDLLAKDDQNGEAEAFKAEIKKTDVKEEKRKKELNEILKSTVSSNDKKTKGRTGWPQHVWALELKQ.

The segment at 76 to 116 (DHSHYGGVPPGAGPPGLGGPRPVKRRGTANRKERRRTQSIN) is disordered. The span at 83 to 94 (VPPGAGPPGLGG) shows a compositional bias: gly residues. Residues 97–112 (PVKRRGTANRKERRRT) are compositionally biased toward basic residues. In terms of domain architecture, bHLH spans 99-151 (KRRGTANRKERRRTQSINSAFAELRECIPNVPADTKLSKIKTLRLATSYIAYL).

Efficient DNA binding requires dimerization with another bHLH protein. Forms homodimers and heterodimers with TCF3 gene products E12 and E47, HAND1 and HEY1, HEY2 and HEYL (hairy-related transcription factors).

It is found in the nucleus. Essential for cardiac morphogenesis, particularly for the formation of the right ventricle and of the aortic arch arteries. Required for vascular development and regulation of angiogenesis, possibly through a VEGF signaling pathway. Also plays an important role in limb development, particularly in the establishment of anterior-posterior polarization, acting as an upstream regulator of sonic hedgehog (SHH) induction in the limb bud. Is involved in the development of branchial arches, which give rise to unique structures in the head and neck. Binds DNA on E-box consensus sequence 5'-CANNTG-3'. This Rattus norvegicus (Rat) protein is Heart- and neural crest derivatives-expressed protein 2 (Hand2).